The chain runs to 203 residues: Ribosome hibernation promotion factor (203 aa).

The protein belongs to the HPF/YfiA ribosome-associated protein family. Long HPF subfamily. As to quaternary structure, interacts with 100S ribosomes.

It is found in the cytoplasm. Required for dimerization of active 70S ribosomes into 100S ribosomes in stationary phase; 100S ribosomes are translationally inactive and sometimes present during exponential growth. This Bradyrhizobium diazoefficiens (strain JCM 10833 / BCRC 13528 / IAM 13628 / NBRC 14792 / USDA 110) protein is Ribosome hibernation promotion factor.